The following is a 483-amino-acid chain: Glycogen synthase kinase-3 alpha (483 aa).

Residues 1-15 (MSGGGPSGGGPGGSG) are compositionally biased toward gly residues. The tract at residues 1 to 96 (MSGGGPSGGG…PPPGVKLGRD (96 aa)) is disordered. At serine 2 the chain carries N-acetylserine. Serine 2 is subject to Phosphoserine. Residue serine 21 is modified to Phosphoserine; by PKB/AKT1. The segment covering 25-82 (PGGGGGGGGGGPGGSASGPGGTGGGKASVGAMGGGVGASSSGGGPSGSGGGGSGGPGA) has biased composition (gly residues). Serine 72, serine 77, and serine 97 each carry phosphoserine. The region spanning 119 to 403 (YTDIKVIGNG…PLEACAHSFF (285 aa)) is the Protein kinase domain. ATP-binding positions include 125 to 133 (IGNGSFGVV) and lysine 148. Aspartate 244 (proton acceptor) is an active-site residue. Position 279 is a phosphotyrosine (tyrosine 279). Positions 443–483 (PHLRSPSGPATLTSSSQALTETQTGQDWQAPDATPTLTNSS) are disordered. The span at 450 to 469 (GPATLTSSSQALTETQTGQD) shows a compositional bias: polar residues.

This sequence belongs to the protein kinase superfamily. CMGC Ser/Thr protein kinase family. GSK-3 subfamily. As to quaternary structure, monomer. Interacts with ARRB2, AXIN1 and CTNNB1/beta-catenin. Interacts with CTNND2. Interacts with LMBR1L. Interacts with DDX3X. Interacts with TNFRSF10B. Post-translationally, phosphorylated by AKT1 at Ser-21: upon insulin-mediated signaling, the activated PKB/AKT1 protein kinase phosphorylates and deactivates GSK3A, resulting in the dephosphorylation and activation of GYS1. Activated by phosphorylation at Tyr-279.

It catalyses the reaction L-seryl-[tau protein] + ATP = O-phospho-L-seryl-[tau protein] + ADP + H(+). The catalysed reaction is L-threonyl-[tau protein] + ATP = O-phospho-L-threonyl-[tau protein] + ADP + H(+). The enzyme catalyses L-seryl-[protein] + ATP = O-phospho-L-seryl-[protein] + ADP + H(+). It carries out the reaction L-threonyl-[protein] + ATP = O-phospho-L-threonyl-[protein] + ADP + H(+). With respect to regulation, activated by phosphorylation at Tyr-279. In response to insulin, inhibited by phosphorylation at Ser-21 by PKB/AKT1; phosphorylation at this site causes a conformational change, preventing access of substrates to the active site. Inhibited by lithium. In terms of biological role, constitutively active protein kinase that acts as a negative regulator in the hormonal control of glucose homeostasis, Wnt signaling and regulation of transcription factors and microtubules, by phosphorylating and inactivating glycogen synthase (GYS1 or GYS2), CTNNB1/beta-catenin, APC and AXIN1. Requires primed phosphorylation of the majority of its substrates. Contributes to insulin regulation of glycogen synthesis by phosphorylating and inhibiting GYS1 activity and hence glycogen synthesis. Regulates glycogen metabolism in liver, but not in muscle. May also mediate the development of insulin resistance by regulating activation of transcription factors. In Wnt signaling, regulates the level and transcriptional activity of nuclear CTNNB1/beta-catenin. Facilitates amyloid precursor protein (APP) processing and the generation of APP-derived amyloid plaques found in Alzheimer disease. May be involved in the regulation of replication in pancreatic beta-cells. Is necessary for the establishment of neuronal polarity and axon outgrowth. Through phosphorylation of the anti-apoptotic protein MCL1, may control cell apoptosis in response to growth factors deprivation. Acts as a regulator of autophagy by mediating phosphorylation of KAT5/TIP60 under starvation conditions, activating KAT5/TIP60 acetyltransferase activity and promoting acetylation of key autophagy regulators, such as ULK1 and RUBCNL/Pacer. Negatively regulates extrinsic apoptotic signaling pathway via death domain receptors. Promotes the formation of an anti-apoptotic complex, made of DDX3X, BRIC2 and GSK3B, at death receptors, including TNFRSF10B. The anti-apoptotic function is most effective with weak apoptotic signals and can be overcome by stronger stimulation. This chain is Glycogen synthase kinase-3 alpha (Gsk3a), found in Rattus norvegicus (Rat).